A 170-amino-acid chain; its full sequence is Large ribosomal subunit protein uL10 (170 aa).

This sequence belongs to the universal ribosomal protein uL10 family. In terms of assembly, part of the ribosomal stalk of the 50S ribosomal subunit. The N-terminus interacts with L11 and the large rRNA to form the base of the stalk. The C-terminus forms an elongated spine to which L12 dimers bind in a sequential fashion forming a multimeric L10(L12)X complex.

Forms part of the ribosomal stalk, playing a central role in the interaction of the ribosome with GTP-bound translation factors. The chain is Large ribosomal subunit protein uL10 from Lactobacillus acidophilus (strain ATCC 700396 / NCK56 / N2 / NCFM).